The following is a 448-amino-acid chain: Cytoplasmic tRNA 2-thiolation protein 2 (448 aa).

It belongs to the CTU2/NCS2 family.

It is found in the cytoplasm. The protein operates within tRNA modification; 5-methoxycarbonylmethyl-2-thiouridine-tRNA biosynthesis. In terms of biological role, plays a central role in 2-thiolation of mcm(5)S(2)U at tRNA wobble positions of tRNA(Lys), tRNA(Glu) and tRNA(Gln). May act by forming a heterodimer with NCS6 that ligates sulfur from thiocarboxylated URM1 onto the uridine of tRNAs at wobble position. Prior mcm(5) tRNA modification by the elongator complex is required for 2-thiolation. May also be involved in protein urmylation. The chain is Cytoplasmic tRNA 2-thiolation protein 2 from Lodderomyces elongisporus (strain ATCC 11503 / CBS 2605 / JCM 1781 / NBRC 1676 / NRRL YB-4239) (Yeast).